Consider the following 337-residue polypeptide: uncharacterized protein (337 aa).

Residues 1–11 (MSEIEEEEEEG) show a composition bias toward acidic residues. The interval 1 to 20 (MSEIEEEEEEGSASAITGSR) is disordered. Serine 2 bears the N-acetylserine mark. A coiled-coil region spans residues 50 to 130 (ALSTRVSALE…LQRDVSKLEG (81 aa)). The tract at residues 139-242 (LQDDDQNAGT…PISPRRHSVS (104 aa)) is disordered. The segment covering 170-182 (SSIQSQQASEAIE) has biased composition (low complexity). Residues 197-211 (LSASLPLVSQTTTPR) are compositionally biased toward polar residues. Threonine 213 is modified (phosphothreonine). Phosphoserine is present on serine 217. Positions 223-233 (ASGTPKTTSRP) are enriched in polar residues. Phosphothreonine is present on threonine 226. Phosphoserine is present on serine 235.

This is an uncharacterized protein from Arabidopsis thaliana (Mouse-ear cress).